A 1516-amino-acid chain; its full sequence is Receptor-type tyrosine-protein phosphatase S (1516 aa).

The signal sequence occupies residues 1 to 28; it reads MRILPSPGMPALLSLVSLLSVLLMGCVA. Residues 29–854 lie on the Extracellular side of the membrane; sequence ESPPVFIKKP…PQPIIDGEEG (826 aa). Ig-like C2-type domains lie at 32-122, 134-223, and 235-317; these read PVFI…AKLT, PNID…ANLY, and PRFS…AQIT. 2 disulfide bridges follow: Cys53–Cys106 and Cys155–Cys206. Residues 67–71 form an important for binding to glycosaminoglycan chains region; the sequence is KKGKK. Asn253 and Asn298 each carry an N-linked (GlcNAc...) asparagine glycan. An intrachain disulfide couples Cys256 to Cys301. 4 Fibronectin type-III domains span residues 324–414, 419–513, 517–606, and 608–692; these read APGT…TGEQ, APRN…TQQG, QPMN…TLQS, and LPKN…TAAN. The chain crosses the membrane as a helical span at residues 855 to 875; it reads LIWVIGPVLAVVFIICIVIAI. Residues 876-1516 are Cytoplasmic-facing; the sequence is LLYKNKRKDS…YLGSFDHYAT (641 aa). 2 Tyrosine-protein phosphatase domains span residues 961 to 1216 and 1248 to 1507; these read LSQE…LLEA and MELE…ALEY. Residues Cys1157 and Cys1448 each act as phosphocysteine intermediate in the active site.

The protein belongs to the protein-tyrosine phosphatase family. Receptor class 2A subfamily. Homodimer. Binding to large heparan sulfate proteoglycan structures promotes oligomerization. Binding to chondroitin sulfate proteoglycan does not lead to oligomerization. Interacts (via Ig-like domains) with NTRK1 and NTRK3, but does not form detectable complexes with NTRK2. Interacts (via extracellular domain) with the heparan sulfate proteoglycans AGRN and COL18A1. Post-translationally, a cleavage occurs, separating the extracellular domain from the transmembrane segment. This process called 'ectodomain shedding' is thought to be involved in receptor desensitization, signal transduction and/or membrane localization. In terms of tissue distribution, detected in embryonic brain, dorsal root ganglion and spinal cord. Detected in embryonic retina (at protein level). Detected in embryonic brain, spinal cord, dorsal root ganglion, trigeminal ganglion, ganglia associated with the precardinal vein and vagus nerve, the inner and outer nuclear layer of the retina, limb, breast muscle, heart, gut and lung.

The protein localises to the cell membrane. It localises to the cell projection. Its subcellular location is the axon. It is found in the perikaryon. The protein resides in the cytoplasmic vesicle. The protein localises to the secretory vesicle. It localises to the synaptic vesicle membrane. Its subcellular location is the synapse. It is found in the synaptosome. The protein resides in the postsynaptic density. The protein localises to the neuron projection. It localises to the growth cone. It catalyses the reaction O-phospho-L-tyrosyl-[protein] + H2O = L-tyrosyl-[protein] + phosphate. In terms of biological role, cell surface receptor that binds to glycosaminoglycans, including chondroitin sulfate proteoglycans and heparan sulfate proteoglycans. Binding to chondroitin sulfate and heparan sulfate proteoglycans has opposite effects on PTPRS oligomerization and regulation of neurite outgrowth. Contributes to the inhibition of neurite and axonal outgrowth by chondroitin sulfate proteoglycans, also after nerve transection. Plays a role in stimulating neurite outgrowth in response to the heparan sulfate proteoglycan GPC2. Required for normal brain development, especially for normal development of the pituitary gland and the olfactory bulb. Functions as tyrosine phosphatase. Mediates dephosphorylation of NTRK1, NTRK2 and NTRK3. Plays a role in down-regulation of signaling cascades that lead to the activation of Akt and MAP kinases. Down-regulates TLR9-mediated activation of NF-kappa-B, as well as production of TNF, interferon alpha and interferon beta. The sequence is that of Receptor-type tyrosine-protein phosphatase S (PTPRS) from Gallus gallus (Chicken).